Consider the following 282-residue polypeptide: Large ribosomal subunit protein uL2 (282 aa).

Positions 223–282 (TVRGSVMNPNDHPHGGGEGRAPIGRKSPVTPWGKKALGVKTRNTKKTSEKLIVRKRSNKK) are disordered.

Belongs to the universal ribosomal protein uL2 family. As to quaternary structure, part of the 50S ribosomal subunit. Forms a bridge to the 30S subunit in the 70S ribosome.

Its function is as follows. One of the primary rRNA binding proteins. Required for association of the 30S and 50S subunits to form the 70S ribosome, for tRNA binding and peptide bond formation. It has been suggested to have peptidyltransferase activity; this is somewhat controversial. Makes several contacts with the 16S rRNA in the 70S ribosome. The chain is Large ribosomal subunit protein uL2 from Mycoplasma mycoides subsp. mycoides SC (strain CCUG 32753 / NCTC 10114 / PG1).